Consider the following 281-residue polypeptide: MSWIQKILPRTQTSHKGNVPEGIWTKCGSCQAVLYKSELEKLQEVCPKCDHHMRITARRRIDAFLDDGDRVELGAEHEPQDVLKFKDSKRYKDRIVAAQKSTNEKDALVVMQGKLKGMPVVVACFEFAFMGGSMASVVGARFVAAVNACLENDMPLICFSASGGARMQEALMSLMQMAKTSAALAKMSKKGLPYISVLTDPTMGGVSASLAMLGDINVAEPKALIGFAGPRVIEQTVREKLPEGFQRSEFLVEKGAIDMIVDRRDMRDRLHSLLVKLHYKN.

In terms of domain architecture, CoA carboxyltransferase N-terminal spans 23 to 281 (IWTKCGSCQA…SLLVKLHYKN (259 aa)). Zn(2+) contacts are provided by Cys27, Cys30, Cys46, and Cys49. Residues 27-49 (CGSCQAVLYKSELEKLQEVCPKC) form a C4-type zinc finger.

It belongs to the AccD/PCCB family. In terms of assembly, acetyl-CoA carboxylase is a heterohexamer composed of biotin carboxyl carrier protein (AccB), biotin carboxylase (AccC) and two subunits each of ACCase subunit alpha (AccA) and ACCase subunit beta (AccD). Zn(2+) is required as a cofactor.

It localises to the cytoplasm. It carries out the reaction N(6)-carboxybiotinyl-L-lysyl-[protein] + acetyl-CoA = N(6)-biotinyl-L-lysyl-[protein] + malonyl-CoA. Its pathway is lipid metabolism; malonyl-CoA biosynthesis; malonyl-CoA from acetyl-CoA: step 1/1. Functionally, component of the acetyl coenzyme A carboxylase (ACC) complex. Biotin carboxylase (BC) catalyzes the carboxylation of biotin on its carrier protein (BCCP) and then the CO(2) group is transferred by the transcarboxylase to acetyl-CoA to form malonyl-CoA. The polypeptide is Acetyl-coenzyme A carboxylase carboxyl transferase subunit beta (Alteromonas mediterranea (strain DSM 17117 / CIP 110805 / LMG 28347 / Deep ecotype)).